Reading from the N-terminus, the 156-residue chain is Small ribosomal subunit protein uS7 (156 aa).

It belongs to the universal ribosomal protein uS7 family. In terms of assembly, part of the 30S ribosomal subunit. Contacts proteins S9 and S11.

One of the primary rRNA binding proteins, it binds directly to 16S rRNA where it nucleates assembly of the head domain of the 30S subunit. Is located at the subunit interface close to the decoding center, probably blocks exit of the E-site tRNA. This Streptococcus thermophilus (strain CNRZ 1066) protein is Small ribosomal subunit protein uS7.